Here is a 580-residue protein sequence, read N- to C-terminus: Arginine--tRNA ligase (580 aa).

Positions Ala131 to His141 match the 'HIGH' region motif.

The protein belongs to the class-I aminoacyl-tRNA synthetase family. Monomer.

It is found in the cytoplasm. It catalyses the reaction tRNA(Arg) + L-arginine + ATP = L-arginyl-tRNA(Arg) + AMP + diphosphate. The chain is Arginine--tRNA ligase from Cereibacter sphaeroides (strain KD131 / KCTC 12085) (Rhodobacter sphaeroides).